The sequence spans 999 residues: MATIMFGSIAAEIPVIKEAIMIAMPKSKHTLHVVQVEAKHMATEIRSERGKLYVAKRFADNAIKAYDSQLKAFDELLKKNSDLQKRLFIGQNSPIKQKKGGACFVRSLSFKQAEERHAKYLKLQEEEHQFLSGAYGDKAYVGSVQGTLDRKVAEKVSFKSPYYKRTCKAVRQVKVLKKAVGSGKVLDQVLEIVAETGVPVTFVGKGANKTLRAQYVRRYGLVIPKIFLCHESGRKVHREMSYWHHKETLQYLCKHGKYGALNENALCKGDSGLLFDQRTAFVKRVTYLPHFIVRGRQEGQLVCATEYLDNVYTIEHYTHKPEEQFFKGWKQVFDKMAPHTFEHDCTIDYNNEQCGELAATICQTLFPVRKLSCNKCRHRIKDLSWEEFKQFILAHLGCCAKLWEEQKNLPGLEKIHSFVVQATSENMIFETSMEIVRLTQNYTSTHMLQIQDINKALMKGSSATQEDLKKASEQLLAMTRWWKNHMTLTNEDALKTFRNKRSSKALINPSLLCDNQLDRNGNFVWGERGRHSKRFFENFFEEVVPSEGYKKYVIRNNPNGFRKLAIDSLIVPMDLARARIALQGESIKREDLTLACVSKQDGNFVYPCCCVTQDDGRPFYSELKSPTKRHLVVGTSGDPKYIDLPATDSDRMYIAKEGYCYLNIFLAMLVNVNEDEAKDFTKMVRDVVVPKLGTWPSMMDVATAVYIMTVFHPETRSAELPRILVDHASQTMHVIDSFGSLSVGYHVLKAGTVNQLIQFASNDLEGEMKHYRVGGDAEQRMRCERALISSIFKPKKMMQILENDPYTLVLGLVSPTVLIHMFRMKHFEKGVELWINKDQSVVKIFLLLEHLTRKIAMNDVLLEQLEMISQQAGRLHEIICDCPKNIHSYRAVKDFLEVKMEAALTNKELANNGFFDINESLGHVSEKNLCKSLREGMARAKLVGKIFCNMAIEKVLKGYGRAFDKESCRRQKRIFKKICECVLHECPNTPRKCTYYNFK.

Positions 176–317 constitute a Peptidase S30 domain; it reads LKKAVGSGKV…LDNVYTIEHY (142 aa). Residues His-230, Glu-239, and Ser-271 each act as for P1 proteinase activity in the active site. Positions 370 to 373 match the Involved in interaction with stylet and aphid transmission motif; the sequence is KLSC. The short motif at 626 to 628 is the Involved in virions binding and aphid transmission element; it reads PTK. The region spanning 652–774 is the Peptidase C6 domain; sequence MYIAKEGYCY…EGEMKHYRVG (123 aa). Active-site for helper component proteinase activity residues include Cys-660 and His-733.

It belongs to the potyviridae P3N-PIPO polyprotein family. Interacts (via PIPO domain) with host PCaP1 protein; this interaction may help to anchor the movement complex to the plasma membrane from which the complex could move to the plasmodesmata. In terms of processing, potyviral RNA is expressed as two polyproteins which undergo post-translational proteolytic processing. Genome polyprotein is processed by NIa-pro, P1 and HC-pro proteinases resulting in the production of at least ten individual proteins. P3N-PIPO is cleaved by P1 and HC-pro proteinases resulting in the production of three individual proteins. The P1 proteinase and the HC-pro cleave only their respective C-termini autocatalytically.

The protein localises to the host cell junction. The protein resides in the host plasmodesma. It catalyses the reaction Hydrolyzes a Gly-|-Gly bond at its own C-terminus, commonly in the sequence -Tyr-Xaa-Val-Gly-|-Gly, in the processing of the potyviral polyprotein.. Functionally, required for aphid transmission and also has proteolytic activity. Only cleaves a Gly-Gly dipeptide at its own C-terminus. Interacts with virions and aphid stylets. Acts as a suppressor of RNA-mediated gene silencing, also known as post-transcriptional gene silencing (PTGS), a mechanism of plant viral defense that limits the accumulation of viral RNAs. May have RNA-binding activity. In terms of biological role, allows efficient cell to cell propagation, by bypassing the host cell wall barrier. Transports viral genome to neighboring plant cells directly through plasmosdesmata, without any budding. This is P3N-PIPO polyprotein from Phaseolus vulgaris (Kidney bean).